A 236-amino-acid polypeptide reads, in one-letter code: tRNA1(Val) (adenine(37)-N6)-methyltransferase (236 aa).

The protein belongs to the methyltransferase superfamily. tRNA (adenine-N(6)-)-methyltransferase family.

The protein resides in the cytoplasm. It carries out the reaction adenosine(37) in tRNA1(Val) + S-adenosyl-L-methionine = N(6)-methyladenosine(37) in tRNA1(Val) + S-adenosyl-L-homocysteine + H(+). In terms of biological role, specifically methylates the adenine in position 37 of tRNA(1)(Val) (anticodon cmo5UAC). The protein is tRNA1(Val) (adenine(37)-N6)-methyltransferase of Aeromonas salmonicida (strain A449).